Consider the following 250-residue polypeptide: 23S rRNA (guanosine-2'-O-)-methyltransferase RlmB (250 aa).

S-adenosyl-L-methionine contacts are provided by glycine 198, leucine 218, and leucine 227.

This sequence belongs to the class IV-like SAM-binding methyltransferase superfamily. RNA methyltransferase TrmH family. RlmB subfamily.

It localises to the cytoplasm. It carries out the reaction guanosine(2251) in 23S rRNA + S-adenosyl-L-methionine = 2'-O-methylguanosine(2251) in 23S rRNA + S-adenosyl-L-homocysteine + H(+). In terms of biological role, specifically methylates the ribose of guanosine 2251 in 23S rRNA. This Pseudomonas syringae pv. tomato (strain ATCC BAA-871 / DC3000) protein is 23S rRNA (guanosine-2'-O-)-methyltransferase RlmB.